A 466-amino-acid chain; its full sequence is Delta-1 crystallin (466 aa).

It belongs to the lyase 1 family. Argininosuccinate lyase subfamily. As to quaternary structure, homotetramer. As to expression, eye lens.

Its function is as follows. Delta crystallin, the principal crystallin in embryonic lens, is found only in birds and reptiles. The polypeptide is Delta-1 crystallin (ASL1) (Meleagris gallopavo (Wild turkey)).